The primary structure comprises 592 residues: NADH-quinone oxidoreductase subunit C/D (592 aa).

Positions 1–183 (MLTEFNSIPA…GPYILTEEKE (183 aa)) are NADH dehydrogenase I subunit C. The interval 207 to 592 (DFMFLNLGPN…IDFVMADVDR (386 aa)) is NADH dehydrogenase I subunit D.

This sequence in the N-terminal section; belongs to the complex I 30 kDa subunit family. It in the C-terminal section; belongs to the complex I 49 kDa subunit family. As to quaternary structure, NDH-1 is composed of 13 different subunits. Subunits NuoB, CD, E, F, and G constitute the peripheral sector of the complex.

It is found in the cell inner membrane. It catalyses the reaction a quinone + NADH + 5 H(+)(in) = a quinol + NAD(+) + 4 H(+)(out). Functionally, NDH-1 shuttles electrons from NADH, via FMN and iron-sulfur (Fe-S) centers, to quinones in the respiratory chain. The immediate electron acceptor for the enzyme in this species is believed to be ubiquinone. Couples the redox reaction to proton translocation (for every two electrons transferred, four hydrogen ions are translocated across the cytoplasmic membrane), and thus conserves the redox energy in a proton gradient. The chain is NADH-quinone oxidoreductase subunit C/D from Acidiphilium cryptum (strain JF-5).